The chain runs to 242 residues: Ribonuclease PH (242 aa).

Phosphate contacts are provided by residues Arg-86 and 124–126; that span reads GTR.

This sequence belongs to the RNase PH family. As to quaternary structure, homohexameric ring arranged as a trimer of dimers.

It carries out the reaction tRNA(n+1) + phosphate = tRNA(n) + a ribonucleoside 5'-diphosphate. Phosphorolytic 3'-5' exoribonuclease that plays an important role in tRNA 3'-end maturation. Removes nucleotide residues following the 3'-CCA terminus of tRNAs; can also add nucleotides to the ends of RNA molecules by using nucleoside diphosphates as substrates, but this may not be physiologically important. Probably plays a role in initiation of 16S rRNA degradation (leading to ribosome degradation) during starvation. This chain is Ribonuclease PH, found in Bacillus pumilus (strain SAFR-032).